The chain runs to 96 residues: uncharacterized protein (96 aa).

Transmembrane regions (helical) follow at residues 27-47 (LYTV…FFFF) and 52-72 (MSAG…RPTI).

It is found in the cell membrane. This is an uncharacterized protein from Bacillus subtilis (strain 168).